A 460-amino-acid polypeptide reads, in one-letter code: Cobyrinate a,c-diamide synthase (460 aa).

The GATase cobBQ-type domain occupies 248–440 (KIAVARDAAF…THFHFGSSTK (193 aa)). Cysteine 331 functions as the Nucleophile in the catalytic mechanism.

This sequence belongs to the CobB/CbiA family. Mg(2+) serves as cofactor.

It carries out the reaction cob(II)yrinate + 2 L-glutamine + 2 ATP + 2 H2O = cob(II)yrinate a,c diamide + 2 L-glutamate + 2 ADP + 2 phosphate + 2 H(+). It functions in the pathway cofactor biosynthesis; adenosylcobalamin biosynthesis; cob(II)yrinate a,c-diamide from sirohydrochlorin (anaerobic route): step 10/10. In terms of biological role, catalyzes the ATP-dependent amidation of the two carboxylate groups at positions a and c of cobyrinate, using either L-glutamine or ammonia as the nitrogen source. This is Cobyrinate a,c-diamide synthase from Priestia megaterium (Bacillus megaterium).